Here is a 361-residue protein sequence, read N- to C-terminus: Probable mannitol dehydrogenase (361 aa).

Positions 51, 73, 104, 107, 110, 118, and 167 each coordinate Zn(2+).

It belongs to the zinc-containing alcohol dehydrogenase family. Zn(2+) is required as a cofactor.

It carries out the reaction D-mannitol + NAD(+) = D-mannose + NADH + H(+). Its function is as follows. Oxidizes mannitol to mannose. Provides the initial step by which translocated mannitol is committed to central metabolism and, by regulating mannitol pool size, is important in regulating salt tolerance at the cellular level. The polypeptide is Probable mannitol dehydrogenase (ELI3) (Mesembryanthemum crystallinum (Common ice plant)).